A 200-amino-acid chain; its full sequence is Large ribosomal subunit protein uL4 (200 aa).

The disordered stretch occupies residues 44 to 71 (AQKTRAEVSGGGKKPWRQKGTGRARAGS).

The protein belongs to the universal ribosomal protein uL4 family. As to quaternary structure, part of the 50S ribosomal subunit.

Functionally, one of the primary rRNA binding proteins, this protein initially binds near the 5'-end of the 23S rRNA. It is important during the early stages of 50S assembly. It makes multiple contacts with different domains of the 23S rRNA in the assembled 50S subunit and ribosome. In terms of biological role, forms part of the polypeptide exit tunnel. The sequence is that of Large ribosomal subunit protein uL4 from Psychrobacter sp. (strain PRwf-1).